Consider the following 223-residue polypeptide: Translation initiation factor 6 (223 aa).

This sequence belongs to the eIF-6 family.

Functionally, binds to the 50S ribosomal subunit and prevents its association with the 30S ribosomal subunit to form the 70S initiation complex. This Sulfolobus acidocaldarius (strain ATCC 33909 / DSM 639 / JCM 8929 / NBRC 15157 / NCIMB 11770) protein is Translation initiation factor 6.